We begin with the raw amino-acid sequence, 262 residues long: MKIHDFKMKKQEQKKISMLTCYDYPSACIVAESNIDCVLVGDSVAMAVHGHPTTIMATIEMMELHTQAVARGLGKQFLITDLPFLGHKSSQGHTVENVKRLLQAGAQAVKIEGADKDTCQTISHLVNAGIPVMGHIGLTPQSIHQLGGYKVQGKNSEQAETLLQQAATLEQAGCFAVVIECVPQDLAKTITDSLVIPTIGIGAGPGTDGQVLVWHDMLGLQTSFNPKFVKKYFRAKDHFIEALNSYVQQVQQMHFPANEHSF.

Asp-42 and Asp-81 together coordinate Mg(2+). 3-methyl-2-oxobutanoate contacts are provided by residues 42–43 (DS), Asp-81, and Lys-110. Glu-112 provides a ligand contact to Mg(2+). Residue Glu-180 is the Proton acceptor of the active site.

Belongs to the PanB family. As to quaternary structure, homodecamer; pentamer of dimers. Mg(2+) is required as a cofactor.

It is found in the cytoplasm. It carries out the reaction 3-methyl-2-oxobutanoate + (6R)-5,10-methylene-5,6,7,8-tetrahydrofolate + H2O = 2-dehydropantoate + (6S)-5,6,7,8-tetrahydrofolate. Its pathway is cofactor biosynthesis; (R)-pantothenate biosynthesis; (R)-pantoate from 3-methyl-2-oxobutanoate: step 1/2. Catalyzes the reversible reaction in which hydroxymethyl group from 5,10-methylenetetrahydrofolate is transferred onto alpha-ketoisovalerate to form ketopantoate. This is 3-methyl-2-oxobutanoate hydroxymethyltransferase from Legionella pneumophila (strain Paris).